The following is a 281-amino-acid chain: Undecaprenyl-diphosphatase (281 aa).

A run of 7 helical transmembrane segments spans residues 4–24 (ILLLKAVILGVVEGLTEFLPI), 46–63 (AFEVIIQFGAILAVCWEF), 83–103 (FVLNLFIASIPAMGLGFLFGK), 108–128 (VLFSPIPVASAFIVGTLIIFW), 187–207 (AVATEFSFFLAIPVIGGATAY), 222–242 (EFTLAIVVGFIAAFISAFVCV), and 257–277 (FAWYRIAFGILVLFTSYTGLI).

This sequence belongs to the UppP family.

It localises to the cell inner membrane. The catalysed reaction is di-trans,octa-cis-undecaprenyl diphosphate + H2O = di-trans,octa-cis-undecaprenyl phosphate + phosphate + H(+). Catalyzes the dephosphorylation of undecaprenyl diphosphate (UPP). Confers resistance to bacitracin. The chain is Undecaprenyl-diphosphatase from Polynucleobacter necessarius subsp. necessarius (strain STIR1).